Here is a 335-residue protein sequence, read N- to C-terminus: Magnesium-protoporphyrin IX monomethyl ester [oxidative] cyclase (335 aa).

This sequence belongs to the AcsF family. Requires Fe cation as cofactor.

It localises to the plastid. The protein localises to the chloroplast. It catalyses the reaction Mg-protoporphyrin IX 13-monomethyl ester + 3 NADPH + 3 O2 + 2 H(+) = 3,8-divinyl protochlorophyllide a + 3 NADP(+) + 5 H2O. Its pathway is porphyrin-containing compound metabolism; chlorophyll biosynthesis (light-independent). Its function is as follows. Catalyzes the formation of the isocyclic ring in chlorophyll biosynthesis. Mediates the cyclase reaction, which results in the formation of divinylprotochlorophyllide (Pchlide) characteristic of all chlorophylls from magnesium-protoporphyrin IX 13-monomethyl ester (MgPMME). The sequence is that of Magnesium-protoporphyrin IX monomethyl ester [oxidative] cyclase from Cyanidioschyzon merolae (strain NIES-3377 / 10D) (Unicellular red alga).